A 446-amino-acid polypeptide reads, in one-letter code: Argininosuccinate synthase (446 aa).

Residues 17-25 (AFSGGLDTS) and Ala43 contribute to the ATP site. An L-citrulline-binding site is contributed by Tyr99. The ATP site is built by Gly129 and Thr131. L-aspartate-binding residues include Thr131, Asn135, and Asp136. Residue Asn135 participates in L-citrulline binding. Asp136 contacts ATP. Arg139 and Ser192 together coordinate L-citrulline. Asp194 is a binding site for ATP. L-citrulline contacts are provided by Thr201, Glu203, and Glu280.

It belongs to the argininosuccinate synthase family. Type 2 subfamily. Homotetramer.

It localises to the cytoplasm. It carries out the reaction L-citrulline + L-aspartate + ATP = 2-(N(omega)-L-arginino)succinate + AMP + diphosphate + H(+). It participates in amino-acid biosynthesis; L-arginine biosynthesis; L-arginine from L-ornithine and carbamoyl phosphate: step 2/3. This chain is Argininosuccinate synthase, found in Polaromonas sp. (strain JS666 / ATCC BAA-500).